The following is a 678-amino-acid chain: Protein KHNYN (678 aa).

A Phosphoserine modification is found at S10. Disordered stretches follow at residues 222–251 (QGVRAPPSDGRESLDTGSMGPGDCRGARGD) and 347–407 (LHNG…ARGG). The span at 355–367 (PRVPSPPPAPEPP) shows a compositional bias: pro residues. Phosphoserine is present on S359. Basic and acidic residues predominate over residues 370-388 (CGDRGDCGDRGDVGDRGDK). One can recognise an RNase NYN domain in the interval 437–589 (LRHIVIDGSN…LGRNGPTLDE (153 aa)). A disordered region spans residues 595–633 (ARTQGSSKAQHPSRGFAEHGKQQQGREEEKGSGGIRKTR). Basic and acidic residues predominate over residues 610-633 (FAEHGKQQQGREEEKGSGGIRKTR).

The protein belongs to the N4BP1 family.

This chain is Protein KHNYN (KHNYN), found in Homo sapiens (Human).